The following is a 273-amino-acid chain: Type II restriction enzyme HgiCII (273 aa).

Belongs to the TdeIII type II restriction endonuclease family.

The enzyme catalyses Endonucleolytic cleavage of DNA to give specific double-stranded fragments with terminal 5'-phosphates.. In terms of biological role, a P subtype restriction enzyme that recognizes the double-stranded sequence 5'-GGWCC-3' and cleaves after G-1. The protein is Type II restriction enzyme HgiCII of Herpetosiphon aurantiacus (Herpetosiphon giganteus).